We begin with the raw amino-acid sequence, 100 residues long: Secreted protein of Ly-6 domain 1 (100 aa).

Positions M1–A22 are cleaved as a signal peptide. The UPAR/Ly6 domain occupies L23–F100. Cystine bridges form between C25/C52, C28/C37, C44/C70, C74/C90, and C91/C97. N-linked (GlcNAc...) asparagine glycosylation occurs at N60.

In terms of processing, glycosylated. In terms of tissue distribution, expressed in placenta, where it is detected in both fetal tissues (cotyledon and intercotyledon) and maternal tissues (caruncle and intercaruncular endometrium) (at protein level). Expressed in the mesenchyme area of villi in the cotyledon (at protein level). In endometrium, expressed in the luminal epithelium and weakly in the subluminal stroma (at protein level). Detected in trophoblast mononucleate cells (TMCs) (at protein level). Also detected in trophoblast binucleate cells (BNCs). Overall, expression is strongest in fetal tissue and lower in maternal tissue. Not detected in other tissues tested.

Its subcellular location is the secreted. Its function is as follows. Binds specifically to type I collagen. The protein is Secreted protein of Ly-6 domain 1 of Bos taurus (Bovine).